The chain runs to 345 residues: AP2-like ethylene-responsive transcription factor At1g16060 (345 aa).

The segment at 15–62 (TRQSKKTSVENETGDDQSATSVVLKAKRKRRSQPRDAPPQRSSVHRGV) is disordered. 2 DNA-binding regions (AP2/ERF) span residues 58–124 (VHRG…LNFP) and 160–218 (KYRG…TNFD). Residues 243–302 (HSDLSPFIKPNHESDLSQSQSSSEDNDDRKTKLLKSSPLVAEEVIGPSTPPEIAPPRRSF) are disordered.

It belongs to the AP2/ERF transcription factor family. AP2 subfamily.

The protein resides in the nucleus. Its function is as follows. Probably acts as a transcriptional activator. Binds to the GCC-box pathogenesis-related promoter element. May be involved in the regulation of gene expression by stress factors and by components of stress signal transduction pathways. This chain is AP2-like ethylene-responsive transcription factor At1g16060, found in Arabidopsis thaliana (Mouse-ear cress).